A 59-amino-acid chain; its full sequence is UPF0434 protein Shew185_1670 (59 aa).

This sequence belongs to the UPF0434 family.

This Shewanella baltica (strain OS185) protein is UPF0434 protein Shew185_1670.